A 106-amino-acid polypeptide reads, in one-letter code: PAT complex subunit Asterix (106 aa).

A disordered region spans residues 1 to 29 (MSTNNMSDPRRPNKVLRYKPPPSECNPAL). The residue at position 2 (S2) is an N-acetylserine. Residues 2-32 (STNNMSDPRRPNKVLRYKPPPSECNPALDDP) lie on the Cytoplasmic side of the membrane. A helical membrane pass occupies residues 33–51 (TPDYMNLLGMIFSMCGLML). Residue K52 is a topological domain, lumenal. Residues 53–70 (LKWCAWVAVYCSFISFAN) traverse the membrane as a helical segment. Residues 71–74 (SRSS) lie on the Cytoplasmic side of the membrane. The chain crosses the membrane as a helical span at residues 75–95 (EDTKQMMSSFMLSISAVVMSY). Residues 96-106 (LQNPQPMTPPW) are Lumenal-facing.

The protein belongs to the Asterix family. In terms of assembly, component of the PAT complex, composed of WDR83OS/Asterix and CCDC47. The PAT complex is part of the multi-pass translocon (MPT) complex, composed of three subcomplexes, the GEL complex (composed of RAB5IF/OPTI and TMCO1), the BOS complex (composed of NCLN/Nicalin, NOMO1 and TMEM147) and the PAT complex (composed of WDR83OS/Asterix and CCDC47). The MPT complex associates with the SEC61 complex.

The protein localises to the endoplasmic reticulum membrane. Functionally, component of the multi-pass translocon (MPT) complex that mediates insertion of multi-pass membrane proteins into the lipid bilayer of membranes. The MPT complex takes over after the SEC61 complex: following membrane insertion of the first few transmembrane segments of proteins by the SEC61 complex, the MPT complex occludes the lateral gate of the SEC61 complex to promote insertion of subsequent transmembrane regions. Within the MPT complex, the PAT subcomplex sequesters any highly polar regions in the transmembrane domains away from the non-polar membrane environment until they can be buried in the interior of the fully assembled protein. Within the PAT subcomplex, WDR83OS/Asterix binds to and redirects the substrate to a location behind the SEC61 complex. The polypeptide is PAT complex subunit Asterix (WDR83OS) (Canis lupus familiaris (Dog)).